The primary structure comprises 173 residues: Bursicon (173 aa).

A signal peptide spans 1 to 32; the sequence is MLRHLLRHENNKVFVLILLYCVLVSILKLCTA. Intrachain disulfides connect Cys52–Cys101, Cys66–Cys115, Cys76–Cys136, Cys80–Cys138, and Cys98–Cys141. The CTCK domain occupies 52-142; the sequence is CQVTPVIHVL…PLECMCRPCT (91 aa).

As to quaternary structure, heterodimer of Burs and Pburs. As to expression, expressed in one to two pairs of neurons in each of the thoracic and abdominal neuromeres of the larval CNS. Coexpressed with CCAP in most CCAP-specific neurons. Coexpressed with Pburs in four bilateral neurons in thoracic and abdominal neuromeres of the ventral nervous system.

The protein resides in the secreted. Its function is as follows. Final heterodimeric neurohormone released at the end of the molting cycle, involved in the sclerotization (tanning) of the insect cuticle, melanization and wing spreading. Heterodimer specifically activates the G protein-coupled receptor rk. The sequence is that of Bursicon from Drosophila melanogaster (Fruit fly).